We begin with the raw amino-acid sequence, 339 residues long: DNA-directed RNA polymerase subunit alpha (339 aa).

Residues 1-233 (MVREKVRIST…DLFIPFLHAE (233 aa)) are alpha N-terminal domain (alpha-NTD). The alpha C-terminal domain (alpha-CTD) stretch occupies residues 267–339 (IALKSIFIDQ…FTINLPKNKF (73 aa)).

Belongs to the RNA polymerase alpha chain family. In terms of assembly, in plastids the minimal PEP RNA polymerase catalytic core is composed of four subunits: alpha, beta, beta', and beta''. When a (nuclear-encoded) sigma factor is associated with the core the holoenzyme is formed, which can initiate transcription.

It localises to the plastid. The protein resides in the chloroplast. The catalysed reaction is RNA(n) + a ribonucleoside 5'-triphosphate = RNA(n+1) + diphosphate. Functionally, DNA-dependent RNA polymerase catalyzes the transcription of DNA into RNA using the four ribonucleoside triphosphates as substrates. This is DNA-directed RNA polymerase subunit alpha from Populus alba (White poplar).